Reading from the N-terminus, the 760-residue chain is Prolyl endopeptidase (760 aa).

Residues S609, D693, and H730 each act as charge relay system in the active site.

The protein belongs to the peptidase S9A family.

The protein localises to the cytoplasm. The enzyme catalyses Hydrolysis of Pro-|-Xaa &gt;&gt; Ala-|-Xaa in oligopeptides.. With respect to regulation, inhibited by chymostatin, Boc-Glu(NHO-Bz)-Pyrrolidide, Z-Pro-L-prolinal dimethyacetal and the peptide H-H-L-P-P-P-V-OH. In terms of biological role, cleaves peptide bonds on the C-terminal side of prolyl residues within peptides that are up to approximately 30 amino acids long. In Dictyostelium discoideum (Social amoeba), this protein is Prolyl endopeptidase (prep).